A 239-amino-acid polypeptide reads, in one-letter code: Cysteine-rich venom protein kaouthin-1 (239 aa).

The N-terminal stretch at 1-18 (MIAFSLLCLAAVLRQSFG) is a signal peptide. Residues 37–165 (VDLHNSLRRR…AWSYFYVCQY (129 aa)) enclose the SCP domain. Intrachain disulfides connect Cys74–Cys152, Cys91–Cys166, Cys147–Cys163, Cys185–Cys192, Cys188–Cys197, Cys201–Cys234, Cys210–Cys228, and Cys219–Cys232. The ShKT domain maps to 201-234 (CTIYNKLTNCDSLLKQGSCQDDWIKSNCPASCFC).

The protein belongs to the CRISP family. In terms of tissue distribution, expressed by the venom gland.

The protein resides in the secreted. Its function is as follows. Inhibits calcium-activated potassium channels (KCa), voltage-gated potassium channel (Kv), and the calcium release channel/ryanodine receptor (RyR). This chain is Cysteine-rich venom protein kaouthin-1, found in Naja kaouthia (Monocled cobra).